We begin with the raw amino-acid sequence, 289 residues long: uncharacterized protein (289 aa).

Transmembrane regions (helical) follow at residues 13–32 (INFA…LSGS), 37–59 (LIIS…HLND), 80–99 (IVTE…IFFI), 104–121 (EIAL…WLYS), 141–160 (VFTY…TIFS), 165–183 (VGVV…GFFL), 203–225 (VLSP…FVVI), 235–252 (TSSL…FAIY), and 265–287 (IISS…AIGC).

It is found in the cell membrane. This is an uncharacterized protein from Archaeoglobus fulgidus (strain ATCC 49558 / DSM 4304 / JCM 9628 / NBRC 100126 / VC-16).